Consider the following 773-residue polypeptide: 4'-phosphopantetheine phosphatase (773 aa).

A2 carries the N-acetylalanine modification. Residues 2 to 402 (AECGASGSGS…SPELGPAQRA (401 aa)) are pantothenate kinase. S196 and S199 together coordinate acetyl-CoA. Y320 is modified (3'-nitrotyrosine). Residues S393 and S404 each carry the phosphoserine modification. The interval 403 to 773 (RSGTFDLLEM…VIFKYEVPAE (371 aa)) is 4'-phosphopantetheine phosphatase. T406 carries the post-translational modification Phosphothreonine. Mn(2+)-binding residues include D623, N624, and D659. A Subfamily II EGMGR motif motif is present at residues 724–728 (EGMGR).

The protein in the N-terminal section; belongs to the type II pantothenate kinase family. It in the C-terminal section; belongs to the damage-control phosphatase family. Phosphopantetheine phosphatase II subfamily. As to quaternary structure, homodimer. Interacts with PKM. The cofactor is Mn(2+). Requires Ni(2+) as cofactor. As to expression, widely expressed with high expression in the muscle. Expressed in the retina and lens epithelium, mainly in ganglion cell layer, outer plexiform layer and retinal pigment layer (at protein level).

The protein resides in the cytoplasm. It carries out the reaction (R)-4'-phosphopantetheine + H2O = (R)-pantetheine + phosphate. It catalyses the reaction (R)-4'-phosphopantetheine sulfonate + H2O = (R)-pantetheine sulfonate + phosphate. The catalysed reaction is (R)-4'-phospho-S-sulfopantetheine + H2O = (R)-S-sulfopantetheine + phosphate. Its activity is regulated as follows. Activity is strongly promoted by Co(2+), Ni(2+), Mg(2+) and Mn(2+). Activity is inhibited by EDTA. Phosphatase which shows a preference for 4'-phosphopantetheine and its oxidatively damaged forms (sulfonate or S-sulfonate), providing strong indirect evidence that the phosphatase activity pre-empts damage in the coenzyme A (CoA) pathway. Hydrolyzing excess 4'-phosphopantetheine could constitute a directed overflow mechanism to prevent its oxidation to the S-sulfonate, sulfonate, or other forms. Hydrolyzing 4'-phosphopantetheine sulfonate or S-sulfonate would forestall their conversion to inactive forms of CoA and acyl carrier protein. May play a role in the physiological regulation of CoA intracellular levels. In Homo sapiens (Human), this protein is 4'-phosphopantetheine phosphatase.